The sequence spans 83 residues: Cytochrome b559 subunit alpha (83 aa).

The chain crosses the membrane as a helical span at residues 21 to 35; the sequence is VIHSITIPSLFIAGW. Histidine 23 serves as a coordination point for heme.

Belongs to the PsbE/PsbF family. In terms of assembly, heterodimer of an alpha subunit and a beta subunit. PSII is composed of 1 copy each of membrane proteins PsbA, PsbB, PsbC, PsbD, PsbE, PsbF, PsbH, PsbI, PsbJ, PsbK, PsbL, PsbM, PsbT, PsbX, PsbY, PsbZ, Psb30/Ycf12, at least 3 peripheral proteins of the oxygen-evolving complex and a large number of cofactors. It forms dimeric complexes. Requires heme b as cofactor.

Its subcellular location is the plastid. It localises to the chloroplast thylakoid membrane. Its function is as follows. This b-type cytochrome is tightly associated with the reaction center of photosystem II (PSII). PSII is a light-driven water:plastoquinone oxidoreductase that uses light energy to abstract electrons from H(2)O, generating O(2) and a proton gradient subsequently used for ATP formation. It consists of a core antenna complex that captures photons, and an electron transfer chain that converts photonic excitation into a charge separation. This chain is Cytochrome b559 subunit alpha, found in Adiantum capillus-veneris (Maidenhair fern).